The chain runs to 149 residues: MFQDTEEKPRTLHDLCQALETTIHNIELQCVECKKPLQRSEVYDFAFADLTVVYREGNPFGICKLCLRFLSKISEYRHYNYSVYGNTLEQTVKKPLNEILIRCIICQRPLCPQEKKRHVDLNKRFHNISGRWAGRCAACWRSRRRETAL.

2 zinc fingers span residues 30-66 (CVEC…CKLC) and 103-139 (CIIC…CAAC). A PDZ-binding domain motif is present at residues 147–149 (TAL).

Belongs to the papillomaviridae E6 protein family. Forms homodimers. Interacts with ubiquitin-protein ligase UBE3A/E6-AP and thus forms a complex with human TP53. Interacts with human NFX1 and MAGI3. Interacts with human IRF3; this interaction inhibits the establishment of antiviral state. Interacts with human TYK2; this interaction inhibits JAK-STAT activation by interferon alpha. Interacts with host DLG1; this interaction leads to the proteasomal degradation of DLG1.

Its subcellular location is the host cytoplasm. The protein localises to the host nucleus. Its function is as follows. This protein may be involved in the oncogenic potential of this virus (cervical neoplasia-associated virus). Functionally, plays a major role in the induction and maintenance of cellular transformation. Acts mainly as an oncoprotein by stimulating the destruction of many host cell key regulatory proteins. E6 associates with host UBE3A/E6-AP ubiquitin-protein ligase, and inactivates tumor suppressors TP53 and TP73 by targeting them to the 26S proteasome for degradation. In turn, DNA damage and chromosomal instabilities increase and lead to cell proliferation and cancer development. The complex E6/E6AP targets several other substrates to degradation via the proteasome including host DLG1 or NFX1, a repressor of human telomerase reverse transcriptase (hTERT). The resulting increased expression of hTERT prevents the shortening of telomere length leading to cell immortalization. Other cellular targets including BAK1, Fas-associated death domain-containing protein (FADD) and procaspase 8, are degraded by E6/E6AP causing inhibition of apoptosis. E6 also inhibits immune response by interacting with host IRF3 and TYK2. These interactions prevent IRF3 transcriptional activities and inhibit TYK2-mediated JAK-STAT activation by interferon alpha resulting in inhibition of the interferon signaling pathway. The sequence is that of Protein E6 from Homo sapiens (Human).